The sequence spans 538 residues: Phosphoenolpyruvate carboxykinase (ATP) (538 aa).

The substrate site is built by Arg61, Tyr195, and Lys201. ATP-binding positions include Lys201, His220, and 236 to 244 (GLSGTGKTT). Lys201 and His220 together coordinate Mn(2+). Asp257 contacts Mn(2+). Residues Glu285, Arg323, and Thr449 each coordinate ATP. Arg323 contributes to the substrate binding site.

Belongs to the phosphoenolpyruvate carboxykinase (ATP) family. Mn(2+) serves as cofactor.

The protein localises to the cytoplasm. The catalysed reaction is oxaloacetate + ATP = phosphoenolpyruvate + ADP + CO2. It participates in carbohydrate biosynthesis; gluconeogenesis. Functionally, involved in the gluconeogenesis. Catalyzes the conversion of oxaloacetate (OAA) to phosphoenolpyruvate (PEP) through direct phosphoryl transfer between the nucleoside triphosphate and OAA. This is Phosphoenolpyruvate carboxykinase (ATP) from Nitrobacter winogradskyi (strain ATCC 25391 / DSM 10237 / CIP 104748 / NCIMB 11846 / Nb-255).